Consider the following 351-residue polypeptide: tRNA (guanine(26)-N(2))-dimethyltransferase (351 aa).

Residues 4 to 350 (VLRREGAVQF…AGYGEVKRAL (347 aa)) enclose the Trm1 methyltransferase domain. Residues Arg39, Arg65, Asp83, Asp109, and Ala110 each contribute to the S-adenosyl-L-methionine site.

Belongs to the class I-like SAM-binding methyltransferase superfamily. Trm1 family.

The catalysed reaction is guanosine(26) in tRNA + 2 S-adenosyl-L-methionine = N(2)-dimethylguanosine(26) in tRNA + 2 S-adenosyl-L-homocysteine + 2 H(+). Functionally, dimethylates a single guanine residue at position 26 of a number of tRNAs using S-adenosyl-L-methionine as donor of the methyl groups. This Pyrobaculum neutrophilum (strain DSM 2338 / JCM 9278 / NBRC 100436 / V24Sta) (Thermoproteus neutrophilus) protein is tRNA (guanine(26)-N(2))-dimethyltransferase.